The following is a 255-amino-acid chain: MLIILTGLPSVGKSTFSKAFSKKMAEKNIDNIILGTDLIRESFPVWKESYEEFIRDSNNYLIKEALENKFSVIVDDTNYYNSKRRDLMNIAKECDTNYVTIYLKAPLNLLLKRNIERGQKIPNEVIKNMYEKFDTPGTKYAWDLPDITVDTTEKIDYNEILNEILEINENKNLKIEEDKIPKSEPVESDLVKIDSLTRNIVGNLIKTGKIDKKDIKLLSEIRKSFLKDCKKIESEKLDFEKIEKDFLDYLNKNLK.

Position 7–14 (7–14 (GLPSVGKS)) interacts with ATP.

It belongs to the L-seryl-tRNA(Sec) kinase family.

It catalyses the reaction L-seryl-tRNA(Sec) + ATP = O-phospho-L-seryl-tRNA(Sec) + ADP. It functions in the pathway aminoacyl-tRNA biosynthesis; selenocysteinyl-tRNA(Sec) biosynthesis; selenocysteinyl-tRNA(Sec) from L-seryl-tRNA(Sec) (archaeal/eukaryal route): step 1/2. Functionally, specifically phosphorylates seryl-tRNA(Sec) to O-phosphoseryl-tRNA(Sec), an activated intermediate for selenocysteine biosynthesis. The protein is L-seryl-tRNA(Sec) kinase (pstK) of Methanococcus maripaludis (strain DSM 14266 / JCM 13030 / NBRC 101832 / S2 / LL).